The sequence spans 391 residues: E3 ubiquitin-protein ligase RMND5A (391 aa).

An N-acetylmethionine modification is found at Met1. In terms of domain architecture, LisH spans 114 to 146; that stretch reads SQRLLNEVMVEHFFRQGMLDVAEELCQESGLSV. Residues 153–210 form the CTLH domain; that stretch reads PFVELNRILEALKVRVLRPALEWAVSNREMLIAQNSSLEFKLHRLYFISLLMGGTTNQ. The RING-Gid-type zinc finger occupies 336–377; it reads CPILRQQTTDNNPPMKLVCGHIISRDALNKMFNGSKLKCPYC.

As to quaternary structure, identified in the CTLH complex that contains GID4, RANBP9 and/or RANBP10, MKLN1, MAEA, RMND5A (or alternatively its paralog RMND5B), GID8, ARMC8, WDR26 and YPEL5. Within this complex, MAEA, RMND5A (or alternatively its paralog RMND5B), GID8, WDR26, and RANBP9 and/or RANBP10 form the catalytic core, while GID4, MKLN1, ARMC8 and YPEL5 have ancillary roles.

It localises to the nucleus. The protein resides in the nucleoplasm. Its subcellular location is the cytoplasm. The catalysed reaction is S-ubiquitinyl-[E2 ubiquitin-conjugating enzyme]-L-cysteine + [acceptor protein]-L-lysine = [E2 ubiquitin-conjugating enzyme]-L-cysteine + N(6)-ubiquitinyl-[acceptor protein]-L-lysine.. Core component of the CTLH E3 ubiquitin-protein ligase complex that selectively accepts ubiquitin from UBE2H and mediates ubiquitination and subsequent proteasomal degradation of the transcription factor HBP1. MAEA and RMND5A are both required for catalytic activity of the CTLH E3 ubiquitin-protein ligase complex. Catalytic activity of the complex is required for normal cell proliferation. The CTLH E3 ubiquitin-protein ligase complex is not required for the degradation of enzymes involved in gluconeogenesis, such as FBP1. The chain is E3 ubiquitin-protein ligase RMND5A (Rmnd5a) from Mus musculus (Mouse).